A 523-amino-acid polypeptide reads, in one-letter code: Keratin, type II cytoskeletal 71 (523 aa).

Residues 1–129 (MSRQFTCKSG…DPEIQKVRAQ (129 aa)) are head. The segment at 130-165 (EREQIKALNNKFASFIDKVRFLEQQNQVLETKWELL) is coil 1A. Residues 130 to 443 (EREQIKALNN…KLLESEECRM (314 aa)) enclose the IF rod domain. Positions 166–184 (QQLDLNNCKNNLEPILEGY) are linker 1. The coil 1B stretch occupies residues 185–276 (ISNLRKQLET…CLFEAEITQI (92 aa)). Residues 277-300 (QSHISDMSVILSMDNNRNLDLDSI) are linker 12. The coil 2 stretch occupies residues 301–439 (IDEVRTQYEE…ATYRKLLESE (139 aa)). The tail stretch occupies residues 440-523 (ECRMSGEFPS…LSAPSKKTSR (84 aa)). The interval 492 to 523 (GGEGRSRGSANDYKDTLGKGSSLSAPSKKTSR) is disordered. Residues 493–508 (GEGRSRGSANDYKDTL) show a composition bias toward basic and acidic residues. Polar residues predominate over residues 510–523 (KGSSLSAPSKKTSR).

This sequence belongs to the intermediate filament family. Heterodimer of a type I and a type II keratin. Associates with KRT16 and/or KRT17. In terms of tissue distribution, highly expressed in hair follicles from scalp. Specifically expressed in the inner root sheath (IRS) of the hair follicle. Present in the all 3 IRS layers: the cuticle, the Henle and the Huxley layers. Also detected in the pseudopods of specialized Huxley cells, termed Fluegelzellen, along the area of differentiated Henle cells (at protein level).

It is found in the cytoplasm. The protein localises to the cytoskeleton. Its function is as follows. Plays a central role in hair formation. Essential component of keratin intermediate filaments in the inner root sheath (IRS) of the hair follicle. In Homo sapiens (Human), this protein is Keratin, type II cytoskeletal 71 (KRT71).